We begin with the raw amino-acid sequence, 217 residues long: Probable transaldolase (217 aa).

The Schiff-base intermediate with substrate role is filled by lysine 84.

Belongs to the transaldolase family. Type 3B subfamily.

The protein localises to the cytoplasm. The catalysed reaction is D-sedoheptulose 7-phosphate + D-glyceraldehyde 3-phosphate = D-erythrose 4-phosphate + beta-D-fructose 6-phosphate. It functions in the pathway carbohydrate degradation; pentose phosphate pathway; D-glyceraldehyde 3-phosphate and beta-D-fructose 6-phosphate from D-ribose 5-phosphate and D-xylulose 5-phosphate (non-oxidative stage): step 2/3. Transaldolase is important for the balance of metabolites in the pentose-phosphate pathway. This chain is Probable transaldolase, found in Roseiflexus sp. (strain RS-1).